The chain runs to 313 residues: D-alanine--D-alanine ligase (313 aa).

The region spanning 108–308 (KLVWQQTGVP…YSELVVKVLS (201 aa)) is the ATP-grasp domain. Position 138–193 (138–193 (VAKLGLPLFVKPASEGSSVAVLKVKTADALPAALSEAATHDKIVIVEKSIEGGGEY)) interacts with ATP. Aspartate 262, glutamate 275, and asparagine 277 together coordinate Mg(2+).

This sequence belongs to the D-alanine--D-alanine ligase family. The cofactor is Mg(2+). Requires Mn(2+) as cofactor.

It localises to the cytoplasm. It catalyses the reaction 2 D-alanine + ATP = D-alanyl-D-alanine + ADP + phosphate + H(+). It functions in the pathway cell wall biogenesis; peptidoglycan biosynthesis. Cell wall formation. This chain is D-alanine--D-alanine ligase, found in Burkholderia vietnamiensis (strain G4 / LMG 22486) (Burkholderia cepacia (strain R1808)).